Here is a 29-residue protein sequence, read N- to C-terminus: Conotoxin pr6a (29 aa).

Intrachain disulfides connect Cys2–Cys20, Cys9–Cys24, and Cys19–Cys28.

As to expression, expressed by the venom duct.

Its subcellular location is the secreted. Intraperitoneal injection into fish (1 nmol) provokes hyperactivity and erratic swimming in various directions after 14 minutes. This Conus parius (Cone snail) protein is Conotoxin pr6a.